Here is a 334-residue protein sequence, read N- to C-terminus: Tetraacyldisaccharide 4'-kinase (334 aa).

60 to 67 (TVGGTGKT) lines the ATP pocket.

Belongs to the LpxK family.

It carries out the reaction a lipid A disaccharide + ATP = a lipid IVA + ADP + H(+). It participates in glycolipid biosynthesis; lipid IV(A) biosynthesis; lipid IV(A) from (3R)-3-hydroxytetradecanoyl-[acyl-carrier-protein] and UDP-N-acetyl-alpha-D-glucosamine: step 6/6. Functionally, transfers the gamma-phosphate of ATP to the 4'-position of a tetraacyldisaccharide 1-phosphate intermediate (termed DS-1-P) to form tetraacyldisaccharide 1,4'-bis-phosphate (lipid IVA). This Stutzerimonas stutzeri (strain A1501) (Pseudomonas stutzeri) protein is Tetraacyldisaccharide 4'-kinase.